The chain runs to 428 residues: Spliceosome RNA helicase DDX39B (428 aa).

Positions 1–19 are enriched in acidic residues; the sequence is MAENDVDNELLDYEEDEVE. Residues 1–35 are disordered; that stretch reads MAENDVDNELLDYEEDEVENAAGGDGSEAPPKKDV. A Q motif motif is present at residues 45–73; the sequence is SGFRDFLLKPELLRAIVDCGFEHPSEVQH. A Helicase ATP-binding domain is found at 76 to 249; the sequence is IPQAILGMDV…RKFMQDPMEI (174 aa). 89–96 is an ATP binding site; the sequence is AKSGMGKT. The DECD box signature appears at 196 to 199; it reads DECD. Residues 261 to 422 enclose the Helicase C-terminal domain; that stretch reads GLQQYYVKLK…ELPDEIDISS (162 aa).

This sequence belongs to the DEAD box helicase family. DECD subfamily. As to quaternary structure, component of the transcription/export (TREX) complex at least composed of ALYREF/THOC4, DDX39B, SARNP/CIP29, CHTOP and the THO subcomplex.

The protein localises to the nucleus. Its subcellular location is the nucleus speckle. It carries out the reaction ATP + H2O = ADP + phosphate + H(+). Functionally, involved in nuclear export of spliced and unspliced mRNA. Component of the TREX complex which is thought to couple mRNA transcription, processing and nuclear export, and specifically associates with spliced mRNA and not with unspliced pre-mRNA. The TREX complex is recruited to spliced mRNAs by a transcription-independent mechanism, binds to mRNA upstream of the exon-junction complex (EJC) and is recruited in a splicing- and cap-dependent manner to a region near the 5' end of the mRNA where it functions in mRNA export to the cytoplasm via the TAP/NXF1 pathway. Involved in transcription elongation and genome stability. In terms of biological role, splice factor that is required for the first ATP-dependent step in spliceosome assembly and for the interaction of U2 snRNP with the branchpoint. Has both RNA-stimulated ATP binding/hydrolysis activity and ATP-dependent RNA unwinding activity. Even with the stimulation of RNA, the ATPase activity is weak. Can only hydrolyze ATP but not other NTPs. The RNA stimulation of ATPase activity does not have a strong preference for the sequence and length of the RNA. However, ssRNA stimulates the ATPase activity much more strongly than dsRNA. Can unwind 5' or 3' overhangs or blunt end RNA duplexes in vitro. The ATPase and helicase activities are not influenced by U2AF2; the effect of ALYREF/THOC4 is reported conflictingly. This chain is Spliceosome RNA helicase DDX39B (DDX39B), found in Gallus gallus (Chicken).